Here is a 322-residue protein sequence, read N- to C-terminus: Phospho-N-acetylmuramoyl-pentapeptide-transferase (322 aa).

10 consecutive transmembrane segments (helical) span residues 6–26, 54–74, 82–102, 122–142, 145–165, 176–196, 200–220, 227–247, 255–275, and 302–322; these read ASCI…PLLI, TMGG…VTAW, VWIL…DDGI, IIIA…FGLY, FAGV…WLVG, LDGL…YIAF, NFAI…FFIF, IFMG…VSIM, LLVG…VISF, and VDIV…AIWG.

It belongs to the glycosyltransferase 4 family. MraY subfamily. It depends on Mg(2+) as a cofactor.

It is found in the cell membrane. The enzyme catalyses UDP-N-acetyl-alpha-D-muramoyl-L-alanyl-gamma-D-glutamyl-L-lysyl-D-alanyl-D-alanine + di-trans,octa-cis-undecaprenyl phosphate = Mur2Ac(oyl-L-Ala-gamma-D-Glu-L-Lys-D-Ala-D-Ala)-di-trans,octa-cis-undecaprenyl diphosphate + UMP. Its pathway is cell wall biogenesis; peptidoglycan biosynthesis. In terms of biological role, catalyzes the initial step of the lipid cycle reactions in the biosynthesis of the cell wall peptidoglycan: transfers peptidoglycan precursor phospho-MurNAc-pentapeptide from UDP-MurNAc-pentapeptide onto the lipid carrier undecaprenyl phosphate, yielding undecaprenyl-pyrophosphoryl-MurNAc-pentapeptide, known as lipid I. In Lactobacillus helveticus (strain DPC 4571), this protein is Phospho-N-acetylmuramoyl-pentapeptide-transferase.